Reading from the N-terminus, the 418-residue chain is CinA-like protein (418 aa).

It belongs to the CinA family.

The chain is CinA-like protein from Cyanothece sp. (strain PCC 7425 / ATCC 29141).